The following is a 433-amino-acid chain: Phosphomethylpyrimidine synthase 2 (433 aa).

Substrate is bound by residues asparagine 66, methionine 94, tyrosine 123, histidine 162, 184–186 (SRG), 225–228 (DALR), and glutamate 264. Histidine 268 is a Zn(2+) binding site. A substrate-binding site is contributed by tyrosine 291. Histidine 332 is a Zn(2+) binding site. [4Fe-4S] cluster contacts are provided by cysteine 408, cysteine 411, and cysteine 415.

Belongs to the ThiC family. The cofactor is [4Fe-4S] cluster.

The enzyme catalyses 5-amino-1-(5-phospho-beta-D-ribosyl)imidazole + S-adenosyl-L-methionine = 4-amino-2-methyl-5-(phosphooxymethyl)pyrimidine + CO + 5'-deoxyadenosine + formate + L-methionine + 3 H(+). Its pathway is cofactor biosynthesis; thiamine diphosphate biosynthesis. Catalyzes the synthesis of the hydroxymethylpyrimidine phosphate (HMP-P) moiety of thiamine from aminoimidazole ribotide (AIR) in a radical S-adenosyl-L-methionine (SAM)-dependent reaction. The polypeptide is Phosphomethylpyrimidine synthase 2 (Saccharolobus solfataricus (strain ATCC 35092 / DSM 1617 / JCM 11322 / P2) (Sulfolobus solfataricus)).